The following is a 125-amino-acid chain: uncharacterized protein (125 aa).

Residues C14–E112 form the HTH hxlR-type domain.

This is an uncharacterized protein from Bacillus subtilis (strain 168).